We begin with the raw amino-acid sequence, 138 residues long: Gonadotropin subunit beta-2 (138 aa).

A signal peptide spans 1-21 (MPASSYFLLFFFMNFFSPAQS). Intrachain disulfides connect C27-C75, C41-C90, C44-C128, C52-C106, C56-C108, and C111-C118. An N-linked (GlcNAc...) asparagine glycan is attached at N31.

The protein belongs to the glycoprotein hormones subunit beta family. As to quaternary structure, heterodimer of an alpha and a beta chain.

Its subcellular location is the secreted. In terms of biological role, involved in gametogenesis and steroidogenesis. This Clarias gariepinus (North African catfish) protein is Gonadotropin subunit beta-2 (cgbb).